The sequence spans 183 residues: Ferritin heavy chain (183 aa).

Met1 is subject to N-acetylmethionine. The residue at position 2 (Thr2) is an N-acetylthreonine; in Ferritin heavy chain, N-terminally processed. The Ferritin-like diiron domain maps to 11–160 (QNYHQDSEAA…DHVTNLRKMG (150 aa)). Positions 28, 63, 66, 108, and 142 each coordinate Fe cation. Phosphoserine is present on residues Ser179 and Ser183.

Belongs to the ferritin family. Oligomer of 24 subunits. There are two types of subunits: L (light) chain and H (heavy) chain. The major chain can be light or heavy, depending on the species and tissue type. The functional molecule forms a roughly spherical shell with a diameter of 12 nm and contains a central cavity into which the insoluble mineral iron core is deposited. Interacts with NCOA4; NCOA4 promotes targeting of the iron-binding ferritin complex to autolysosomes following starvation or iron depletion.

The protein resides in the cytoplasm. The protein localises to the lysosome. It localises to the cytoplasmic vesicle. It is found in the autophagosome. The catalysed reaction is 4 Fe(2+) + O2 + 4 H(+) = 4 Fe(3+) + 2 H2O. Functionally, stores iron in a soluble, non-toxic, readily available form. Important for iron homeostasis. Has ferroxidase activity. Iron is taken up in the ferrous form and deposited as ferric hydroxides after oxidation. Also plays a role in delivery of iron to cells. Mediates iron uptake in capsule cells of the developing kidney. Delivery to lysosomes is mediated by the cargo receptor NCOA4 for autophagic degradation and release of iron. This is Ferritin heavy chain (FTH1) from Felis catus (Cat).